The chain runs to 460 residues: L-seryl-tRNA(Sec) selenium transferase (460 aa).

Residue Lys-293 is modified to N6-(pyridoxal phosphate)lysine.

This sequence belongs to the SelA family. It depends on pyridoxal 5'-phosphate as a cofactor.

It is found in the cytoplasm. The enzyme catalyses L-seryl-tRNA(Sec) + selenophosphate + H(+) = L-selenocysteinyl-tRNA(Sec) + phosphate. The protein operates within aminoacyl-tRNA biosynthesis; selenocysteinyl-tRNA(Sec) biosynthesis; selenocysteinyl-tRNA(Sec) from L-seryl-tRNA(Sec) (bacterial route): step 1/1. Functionally, converts seryl-tRNA(Sec) to selenocysteinyl-tRNA(Sec) required for selenoprotein biosynthesis. The protein is L-seryl-tRNA(Sec) selenium transferase of Pasteurella multocida (strain Pm70).